An 86-amino-acid chain; its full sequence is Putative membrane protein insertion efficiency factor (86 aa).

Residues 66 to 86 (FSKGGFDPVPPHDGVPGKKED) form a disordered region.

The protein belongs to the UPF0161 family.

The protein localises to the cell inner membrane. In terms of biological role, could be involved in insertion of integral membrane proteins into the membrane. The sequence is that of Putative membrane protein insertion efficiency factor from Chlorobium luteolum (strain DSM 273 / BCRC 81028 / 2530) (Pelodictyon luteolum).